We begin with the raw amino-acid sequence, 577 residues long: Arginine--tRNA ligase (577 aa).

The 'HIGH' region motif lies at Pro-122–His-132.

This sequence belongs to the class-I aminoacyl-tRNA synthetase family. As to quaternary structure, monomer.

The protein localises to the cytoplasm. It catalyses the reaction tRNA(Arg) + L-arginine + ATP = L-arginyl-tRNA(Arg) + AMP + diphosphate. The polypeptide is Arginine--tRNA ligase (Shigella flexneri).